The sequence spans 210 residues: Fibrillarin-like rRNA/tRNA 2'-O-methyltransferase (210 aa).

A disordered region spans residues 1-34; the sequence is MTLPSGVERHDFGGETSLATQGQPVYGERTDGDW. S-adenosyl-L-methionine contacts are provided by residues 71–72, 87–88, 112–113, and 132–135; these read TT, EF, DA, and DVAT.

The protein belongs to the methyltransferase superfamily. Fibrillarin family. In terms of assembly, interacts with nop5. Component of box C/D small ribonucleoprotein (sRNP) particles that contain rpl7ae, FlpA and nop5, plus a guide RNA.

Functionally, involved in pre-rRNA and tRNA processing. Utilizes the methyl donor S-adenosyl-L-methionine to catalyze the site-specific 2'-hydroxyl methylation of ribose moieties in rRNA and tRNA. Site specificity is provided by a guide RNA that base pairs with the substrate. Methylation occurs at a characteristic distance from the sequence involved in base pairing with the guide RNA. The sequence is that of Fibrillarin-like rRNA/tRNA 2'-O-methyltransferase from Haloarcula marismortui (strain ATCC 43049 / DSM 3752 / JCM 8966 / VKM B-1809) (Halobacterium marismortui).